Consider the following 235-residue polypeptide: tRNA pseudouridine synthase B (235 aa).

D45 (nucleophile) is an active-site residue.

This sequence belongs to the pseudouridine synthase TruB family. Type 1 subfamily.

It catalyses the reaction uridine(55) in tRNA = pseudouridine(55) in tRNA. Responsible for synthesis of pseudouridine from uracil-55 in the psi GC loop of transfer RNAs. This is tRNA pseudouridine synthase B from Chlamydia felis (strain Fe/C-56) (Chlamydophila felis).